The sequence spans 128 residues: Fluoride-specific ion channel FluC (128 aa).

Helical transmembrane passes span phenylalanine 3 to threonine 23, leucine 34 to leucine 54, isoleucine 65 to phenylalanine 85, and phenylalanine 102 to isoleucine 122. Residues glycine 77 and threonine 80 each contribute to the Na(+) site.

The protein belongs to the fluoride channel Fluc/FEX (TC 1.A.43) family.

The protein resides in the cell inner membrane. It catalyses the reaction fluoride(in) = fluoride(out). Na(+) is not transported, but it plays an essential structural role and its presence is essential for fluoride channel function. Functionally, fluoride-specific ion channel. Important for reducing fluoride concentration in the cell, thus reducing its toxicity. This Campylobacter fetus subsp. fetus (strain 82-40) protein is Fluoride-specific ion channel FluC.